The primary structure comprises 147 residues: uncharacterized protein (147 aa).

Helical transmembrane passes span 13 to 33 (LSLV…IIGL), 45 to 65 (LFVG…AYFL), 80 to 100 (YLFT…LILI), and 116 to 136 (WGFF…IIPY).

It localises to the cell membrane. This is an uncharacterized protein from Methanocaldococcus jannaschii (strain ATCC 43067 / DSM 2661 / JAL-1 / JCM 10045 / NBRC 100440) (Methanococcus jannaschii).